The primary structure comprises 623 residues: Methionine--tRNA ligase (623 aa).

The short motif at 11–21 (PYANGPRHIGH) is the 'HIGH' region element. The Zn(2+) site is built by cysteine 143, cysteine 146, cysteine 156, and cysteine 159. The 'KMSKS' region signature appears at 347–351 (KFSSS). ATP is bound at residue serine 350.

This sequence belongs to the class-I aminoacyl-tRNA synthetase family. MetG type 1 subfamily. Monomer. It depends on Zn(2+) as a cofactor.

It localises to the cytoplasm. The catalysed reaction is tRNA(Met) + L-methionine + ATP = L-methionyl-tRNA(Met) + AMP + diphosphate. Functionally, is required not only for elongation of protein synthesis but also for the initiation of all mRNA translation through initiator tRNA(fMet) aminoacylation. This chain is Methionine--tRNA ligase, found in Bifidobacterium animalis subsp. lactis (strain AD011).